The following is a 132-amino-acid chain: MLKTLQIKTTKRDEMIDITREVEAFLQETGITSGAALIYCPHTTAGITINENADPDVKKDMLRRFDEVYPWEHELDRHMEGNTAAHMKSSTVGASQHVIVENGRLILGTWQGIYFCEFDGPRTRTCYIKMMG.

The protein belongs to the UPF0047 family.

This is UPF0047 protein YugU (yugU) from Bacillus subtilis (strain 168).